Reading from the N-terminus, the 280-residue chain is MTLKQAFDSALKHLEAADTPSPRLSAELLLMFSLNCDRAYLFTYPERELTADEQARYDEAIARRCHGEPAQYITGHQEFYGRDFLVSPAVLIPRPETEHLIEAVLELAPREVRWEVLDVGTGSGCIAATLAKEFPRMKVTAVDISPEALQIAQANAARLEAQVEFRVSDLLSAIEPGRQFDMIVSNPPYVGECEADKVQRQVKDFEPHCAVFGGERGMDIIKRLAPQVWEHLKPGGWFLMEIGYSIADPVHEIMRDWTNFKVVPDLRGIPRVVVGRKPTS.

S-adenosyl-L-methionine contacts are provided by residues 120-124, D143, and N186; that span reads GTGSG. Substrate is bound at residue 186 to 189; sequence NPPY.

The protein belongs to the protein N5-glutamine methyltransferase family. PrmC subfamily.

It carries out the reaction L-glutaminyl-[peptide chain release factor] + S-adenosyl-L-methionine = N(5)-methyl-L-glutaminyl-[peptide chain release factor] + S-adenosyl-L-homocysteine + H(+). Functionally, methylates the class 1 translation termination release factors RF1/PrfA and RF2/PrfB on the glutamine residue of the universally conserved GGQ motif. This is Release factor glutamine methyltransferase from Koribacter versatilis (strain Ellin345).